The following is a 55-amino-acid chain: ATP synthase protein 8 (55 aa).

Residues 11–31 form a helical membrane-spanning segment; the sequence is LIMFSVTLMLLIVLVINHFML.

Belongs to the ATPase protein 8 family. As to quaternary structure, F-type ATPases have 2 components, CF(1) - the catalytic core - and CF(0) - the membrane proton channel.

The protein localises to the mitochondrion membrane. Functionally, mitochondrial membrane ATP synthase (F(1)F(0) ATP synthase or Complex V) produces ATP from ADP in the presence of a proton gradient across the membrane which is generated by electron transport complexes of the respiratory chain. F-type ATPases consist of two structural domains, F(1) - containing the extramembraneous catalytic core and F(0) - containing the membrane proton channel, linked together by a central stalk and a peripheral stalk. During catalysis, ATP synthesis in the catalytic domain of F(1) is coupled via a rotary mechanism of the central stalk subunits to proton translocation. Part of the complex F(0) domain. Minor subunit located with subunit a in the membrane. This is ATP synthase protein 8 (MT-ATP8) from Albinaria caerulea (Land snail).